We begin with the raw amino-acid sequence, 82 residues long: UPF0180 protein BH2667 (82 aa).

Belongs to the UPF0180 family.

This Halalkalibacterium halodurans (strain ATCC BAA-125 / DSM 18197 / FERM 7344 / JCM 9153 / C-125) (Bacillus halodurans) protein is UPF0180 protein BH2667.